The chain runs to 140 residues: 3-hydroxyacyl-[acyl-carrier-protein] dehydratase FabZ (140 aa).

His47 is an active-site residue.

It belongs to the thioester dehydratase family. FabZ subfamily.

The protein localises to the cytoplasm. It catalyses the reaction a (3R)-hydroxyacyl-[ACP] = a (2E)-enoyl-[ACP] + H2O. Its function is as follows. Involved in unsaturated fatty acids biosynthesis. Catalyzes the dehydration of short chain beta-hydroxyacyl-ACPs and long chain saturated and unsaturated beta-hydroxyacyl-ACPs. This is 3-hydroxyacyl-[acyl-carrier-protein] dehydratase FabZ from Streptococcus gordonii (strain Challis / ATCC 35105 / BCRC 15272 / CH1 / DL1 / V288).